The primary structure comprises 88 residues: MMSFQKIYSPTQLANAMKLVRQQNGWTQSELAKKIGIKQATISNFENNPDNTTLTTFFKILQSLELSMTLCDAKNASPESTEQQNLEW.

One can recognise an HTH cro/C1-type domain in the interval 17 to 71; sequence MKLVRQQNGWTQSELAKKIGIKQATISNFENNPDNTTLTTFFKILQSLELSMTLC. The segment at residues 21–47 is a DNA-binding region (H-T-H motif); the sequence is RQQNGWTQSELAKKIGIKQATISNFEN.

Homodimer. Binds operator DNA sites in the absence of HipA, inducing a 70 degree bend in consecutive operators and deforming DNA between the operators so that HipB dimers bind on opposite faces of the DNA. Forms a HipA(2)HipB(2) heterotetramer which can interact with a single operator site on DNA, inducing a 70 degree bend. When 2 operators are present each HipB dimer contacts 1 HipA molecule, which are brought together by the DNA bend and dimerize, blocking the HipA active site and inactivating its toxic activity. HipA-HipB-induced bending also distorts the -35 and -10 boxes of the promoter and probably prevents sigma-factor binding, and additionally bound HipB and HipA block RNA polymerase access to the -35 box, thus repressing the operon. This complex also blocks the toxic activity of HipA. Mutations present in allele hipA7 (G22S and D291A) decrease the affinity of HipA for HipB. Post-translationally, degraded by Lon protease in vivo; half-life is 17 minutes in wild-type cells and over 200 minutes in a lon deletion strain. In vitro degradation by Lon is Mg(2+)-ATP-dependent.

With respect to regulation, degraded by Lon protease; degradation is inhibited in a HipA-HipB complex and when bound to the operator consensus sequence dsDNA. In terms of biological role, antitoxin component of a type II toxin-antitoxin (TA) system. Neutralizes the toxic effect of cognate toxin HipA. Also neutralizes the toxic effect of non-cognate toxin YjjJ. Binds to operator sites with the consensus sequence 5-'TATCCN(8)GGATA-3' to repress the hipBA operon promoter; binding of HipB(2) to DNA induces a 70 degree bend. This forces HipA dimerization, which blocks HipA's active site and thus its toxic action. May play a role in biofilm formation. The sequence is that of Antitoxin HipB (hipB) from Escherichia coli (strain K12).